Consider the following 260-residue polypeptide: Phosphoribosylaminoimidazole-succinocarboxamide synthase (260 aa).

It belongs to the SAICAR synthetase family.

The catalysed reaction is 5-amino-1-(5-phospho-D-ribosyl)imidazole-4-carboxylate + L-aspartate + ATP = (2S)-2-[5-amino-1-(5-phospho-beta-D-ribosyl)imidazole-4-carboxamido]succinate + ADP + phosphate + 2 H(+). The protein operates within purine metabolism; IMP biosynthesis via de novo pathway; 5-amino-1-(5-phospho-D-ribosyl)imidazole-4-carboxamide from 5-amino-1-(5-phospho-D-ribosyl)imidazole-4-carboxylate: step 1/2. The polypeptide is Phosphoribosylaminoimidazole-succinocarboxamide synthase (Pelagibacter ubique (strain HTCC1062)).